Consider the following 123-residue polypeptide: UPF0738 protein BCE_1319 (123 aa).

Belongs to the UPF0738 family.

The sequence is that of UPF0738 protein BCE_1319 from Bacillus cereus (strain ATCC 10987 / NRS 248).